The sequence spans 839 residues: ABC transporter A family member 7 (839 aa).

Transmembrane regions (helical) follow at residues 30 to 50, 238 to 258, 286 to 306, 321 to 341, 352 to 372, 378 to 398, and 419 to 439; these read GVQI…KLWI, IASL…LPLF, IMTF…ISLI, FALF…AFFL, SIFG…LSLF, VFYY…LCGL, and ILFW…YLDK. The region spanning 525–756 is the ABC transporter domain; it reads LIVQGLRKQF…FGDGYSVRID (232 aa). 559–566 serves as a coordination point for ATP; it reads GPNGAGKT.

Belongs to the ABC transporter superfamily. ABCA family.

Its subcellular location is the membrane. The chain is ABC transporter A family member 7 (abcA7) from Dictyostelium discoideum (Social amoeba).